Consider the following 280-residue polypeptide: Cell envelope integrity protein EipB (280 aa).

The signal sequence occupies residues 1–24 (MRFVRIAAAASGATVFMWAGFAGA). Cys-69 and Cys-278 are disulfide-bonded.

As to quaternary structure, monomer.

It is found in the periplasm. Functions in the periplasm to maintain cell envelope integrity. In Brucella abortus (strain 2308), this protein is Cell envelope integrity protein EipB.